Consider the following 881-residue polypeptide: Valine--tRNA ligase (881 aa).

The 'HIGH' region signature appears at 42–52 (PNITGDLHVGH). Residues 554 to 558 (KMSKS) carry the 'KMSKS' region motif. Lys-557 serves as a coordination point for ATP.

The protein belongs to the class-I aminoacyl-tRNA synthetase family. ValS type 1 subfamily. Monomer.

It is found in the cytoplasm. It catalyses the reaction tRNA(Val) + L-valine + ATP = L-valyl-tRNA(Val) + AMP + diphosphate. Its function is as follows. Catalyzes the attachment of valine to tRNA(Val). As ValRS can inadvertently accommodate and process structurally similar amino acids such as threonine, to avoid such errors, it has a 'posttransfer' editing activity that hydrolyzes mischarged Thr-tRNA(Val) in a tRNA-dependent manner. This Wigglesworthia glossinidia brevipalpis protein is Valine--tRNA ligase.